A 314-amino-acid polypeptide reads, in one-letter code: Malate dehydrogenase (314 aa).

NAD(+) is bound by residues 7–12 and D32; that span reads GAGNVG. 2 residues coordinate substrate: R81 and R87. NAD(+)-binding positions include N94 and 117-119; that span reads VAN. Residues N119 and R150 each coordinate substrate. The active-site Proton acceptor is the H174.

The protein belongs to the LDH/MDH superfamily. MDH type 3 family.

The enzyme catalyses (S)-malate + NAD(+) = oxaloacetate + NADH + H(+). Catalyzes the reversible oxidation of malate to oxaloacetate. In Salinibacter ruber (strain DSM 13855 / M31), this protein is Malate dehydrogenase.